Here is a 442-residue protein sequence, read N- to C-terminus: ATP-dependent protease ATPase subunit HslU (442 aa).

Residues I18, 60-65, D255, E320, and R392 each bind ATP; that span reads GVGKTE.

It belongs to the ClpX chaperone family. HslU subfamily. In terms of assembly, a double ring-shaped homohexamer of HslV is capped on each side by a ring-shaped HslU homohexamer. The assembly of the HslU/HslV complex is dependent on binding of ATP.

It localises to the cytoplasm. In terms of biological role, ATPase subunit of a proteasome-like degradation complex; this subunit has chaperone activity. The binding of ATP and its subsequent hydrolysis by HslU are essential for unfolding of protein substrates subsequently hydrolyzed by HslV. HslU recognizes the N-terminal part of its protein substrates and unfolds these before they are guided to HslV for hydrolysis. This chain is ATP-dependent protease ATPase subunit HslU, found in Shewanella sp. (strain W3-18-1).